The chain runs to 1693 residues: Latrophilin Cirl (1693 aa).

Over 1–753 (MLPTILSISY…LFTMFDGNMR (753 aa)) the chain is Extracellular. Positions 25–114 (ACEGKKLTIE…KYLEAHYQCI (90 aa)) constitute an SUEL-type lectin domain. An N-linked (GlcNAc...) asparagine glycan is attached at asparagine 142. Polar residues-rich tracts occupy residues 185–198 (TAVT…STTA) and 256–265 (NVTSPSNTRI). Residues 185–299 (TAVTHSTPWS…PGTAASGSVA (115 aa)) are disordered. Residue asparagine 256 is glycosylated (N-linked (GlcNAc...) asparagine). Low complexity predominate over residues 275–299 (DDGTLLTTKSSPNRPPGTAASGSVA). N-linked (GlcNAc...) asparagine glycans are attached at residues asparagine 301, asparagine 340, asparagine 397, asparagine 641, asparagine 689, and asparagine 716. The tract at residues 375-399 (YDEYDDDASSTTPAPSGGDCLHNSS) is disordered. The region spanning 564 to 740 (KKSKIYSSVV…AILMDVVDEH (177 aa)) is the GAIN-B domain. Cystine bridges form between cysteine 695-cysteine 722 and cysteine 710-cysteine 724. The tract at residues 695–740 (CVFWNYIDHAWSANGCSLESTNRTHSVCSCNHLTNFAILMDVVDEH) is GPS. Residues 754-774 (IFIYISIGICVVFIVIALLTL) traverse the membrane as a helical segment. At 775 to 787 (KLFNGVFVKSART) the chain is on the cytoplasmic side. A helical transmembrane segment spans residues 788–808 (SIYTSIYLCLLAIELLFLLGI). The Extracellular portion of the chain corresponds to 809–814 (EQTETS). A helical membrane pass occupies residues 815 to 835 (IFCGFITIFLHCAILSGTAWF). The Cytoplasmic segment spans residues 836 to 861 (CYEAFHSYSTLTSDELLLEVDQTPKV). A helical membrane pass occupies residues 862–882 (NCYYLLSYGLSLSVVAISLVI). Residues 883-906 (DPSTYTQNDYCVLMEANALFYATF) lie on the Extracellular side of the membrane. Residues 907–927 (VVPVLVFFVAAIGYTFLSWII) form a helical membrane-spanning segment. At 928–954 (MCRKSRTGLKTKEHTRLASVRFDIRCS) the chain is on the cytoplasmic side. The chain crosses the membrane as a helical span at residues 955-975 (FVFLLLLSAVWCSAYFYLRGA). Residues 976–985 (KMDDDTADVY) lie on the Extracellular side of the membrane. A helical transmembrane segment spans residues 986 to 1006 (GYCFICFNTLLGLYIFVFHCI). The Cytoplasmic segment spans residues 1007-1693 (QNEKIRREYR…VRCYLEPLAK (687 aa)). Serine 1142 is modified (phosphoserine). 5 disordered regions span residues 1156–1194 (HKQQ…LKTP), 1220–1247 (KPNS…LHSR), 1294–1319 (QQQL…AEQH), 1433–1521 (GGGS…SDER), and 1601–1673 (LAVN…QQRH). A phosphoserine mark is found at serine 1239 and serine 1246. A compositionally biased stretch (low complexity) spans 1294-1309 (QQQLRRQQLHQQQQQL). Phosphoserine is present on residues serine 1310 and serine 1311. Residues 1439–1464 (GGSVSSRSQQQQLKKQQQQQSLAQQR) are compositionally biased toward low complexity. Composition is skewed to acidic residues over residues 1472 to 1486 (DDDD…EEAT) and 1496 to 1507 (CDEDEEEDESDL). The span at 1508 to 1521 (EHDAHGLPPQSDER) shows a compositional bias: basic and acidic residues. Over residues 1630 to 1655 (LQKLSPQSTTSSSSHTSHSNPNLHPH) the composition is skewed to low complexity. Basic residues predominate over residues 1656–1672 (QLTHPHPHQHPPHHQQR).

The protein belongs to the G-protein coupled receptor 2 family. LN-TM7 subfamily. In terms of assembly, forms a heterodimer, consisting of a large extracellular region non-covalently linked to a seven-transmembrane moiety. In terms of processing, proteolytically cleaved into 2 subunits, an extracellular subunit and a seven-transmembrane subunit.

It localises to the cell membrane. This is Latrophilin Cirl from Drosophila sechellia (Fruit fly).